Reading from the N-terminus, the 2162-residue chain is Calpain-type cysteine protease ADL1 (2162 aa).

The signal sequence occupies residues 1 to 33 (MEEEEHRGVVLVCSICGFLFAVLGPLSFWILWA). At 34–70 (VNWRPWRLYSWIYARKWPAYVQGPQLSTLCSFFTLFA) the chain is on the extracellular side. A helical transmembrane segment spans residues 71 to 91 (WLVVVSPITVLLVWGGILIAL). Topologically, residues 92–95 (LERN) are cytoplasmic. A helical transmembrane segment spans residues 96–116 (IIGLAVIMVGVALLLSFYSIM). At 117 to 127 (LWWRTQWQSSK) the chain is on the extracellular side. A helical transmembrane segment spans residues 128–148 (AVAYLLLLAVGLLCAYEFCAV). At 149 to 164 (YVTTGASASELNSPSG) the chain is on the cytoplasmic side. The helical transmembrane segment at 165 to 185 (FFFGVSAISLAINMLFISKIL) threads the bilayer. Over 186–236 (FNGSGFDVDEYVRRLYKFAYSDCVEVAPVSCSPDPPDPSELYMTKSSRVLH) the chain is Extracellular. A helical membrane pass occupies residues 237–257 (LGLLYLCSLMVLVVYSILYGL). The Cytoplasmic portion of the chain corresponds to 258 to 264 (TSKEARW). A helical membrane pass occupies residues 265–285 (LGALTSVAVVILDWNLGLCSF). The Extracellular portion of the chain corresponds to 286–294 (RFELLKSRM). The helical transmembrane segment at 295 to 315 (IALFVAGTSRVFLICFGVHYW) threads the bilayer. Topologically, residues 316 to 320 (YLGHC) are cytoplasmic. The chain crosses the membrane as a helical span at residues 321-341 (ISYAFVASVLLAAAVSCWLSI). At 342–626 (SNPSVARIDA…LMFHQVAGSP (285 aa)) the chain is on the extracellular side. The interval 366-403 (KGQTSSSNSSDGCGSSVKRSSGSVEAGPHGNATDSMYR) is disordered. A compositionally biased stretch (low complexity) spans 370 to 381 (SSSNSSDGCGSS). A helical membrane pass occupies residues 627–647 (IRAFVVFTLIFIIETVTVAVH). Over 648 to 663 (RPKPIKVINATHEQFE) the chain is Cytoplasmic. The helical transmembrane segment at 664–684 (FGFSILLLSPVVCSIMAFIWS) threads the bilayer. The Extracellular segment spans residues 685-697 (LCAEEMTMTSKPR). Residues 698–718 (KYGFIAWLLSTCVGLLLSFLS) form a helical membrane-spanning segment. Topologically, residues 719–722 (KSSV) are cytoplasmic. Residues 723 to 743 (ILGLSLTVPLMVACLSFAIPI) form a helical membrane-spanning segment. The Extracellular segment spans residues 744-773 (WMRNGYRFWIPGGELDSRENIRQAPGKKER). Residues 774–794 (ALFAISITVFTASVIGLGAIV) traverse the membrane as a helical segment. Residues 795 to 825 (SAKPLDALGYKGWDADKKSFYSPYATSMYLG) are Cytoplasmic-facing. Residues 826–846 (WALSSTIAVLATGVIPIVAWF) form a helical membrane-spanning segment. The Extracellular segment spans residues 847–856 (ATYRFSPSSA). The chain crosses the membrane as a helical span at residues 857–877 (ICVGLFATVLVSFCGVSYWGV). Residues 878–890 (VNSRQDGVPLKAD) lie on the Cytoplasmic side of the membrane. The chain crosses the membrane as a helical span at residues 891–911 (FLAALLPLLCIPAVFSLFTGM). The Extracellular portion of the chain corresponds to 912–924 (YKWKDDDWKISRG). The chain crosses the membrane as a helical span at residues 925–945 (VYLFVGMGVLLLLGAISAVIV). The Cytoplasmic portion of the chain corresponds to 946 to 949 (TIRP). Residues 950–970 (WTVGVACLLVILFLVFAIGVI) traverse the membrane as a helical segment. The Extracellular portion of the chain corresponds to 971–984 (HYWTSNNFYLTRTQ). A helical transmembrane segment spans residues 985–1005 (MLLVCSLAFLLALAAFLMGLF). Residues 1006 to 1019 (QEKPFVGASIGYFS) lie on the Cytoplasmic side of the membrane. Residues 1020–1040 (FLFLLTGRALTVLLSPPIVVY) traverse the membrane as a helical segment. Topologically, residues 1041–1063 (SPRVLPVYVYDAHADSAKNVSYA) are extracellular. Residues 1064–1084 (FLILYGIALATEVWGVIASLI) traverse the membrane as a helical segment. Topologically, residues 1085 to 2162 (LNPPFIGAAI…TKAPIKLEAV (1078 aa)) are cytoplasmic. Phosphoserine is present on residues S1372 and S1377. A Calpain catalytic 1 domain is found at 1418 to 1611 (TGRHCGEIDL…ICSAEYGLFD (194 aa)). S1668 bears the Phosphoserine mark. Residues 1706–2008 (NFTDQEFPPD…FRSIYVCRVY (303 aa)) enclose the Calpain catalytic 2 domain. Catalysis depends on residues C1772, H1930, and N1950.

Belongs to the peptidase C2 family. Autocatalytic proteolytic cleavage leading to the production of mainly cytoplasmic localized subproducts of about 85 and 120 kDa. As to expression, ubiquitously expressed with higher levels in embryos, vasculatures, leaf primordia, leaf margins, and shoot apical meristem (SAM).

The protein localises to the endoplasmic reticulum membrane. Its subcellular location is the cytoplasm. The protein resides in the cell membrane. It is found in the endosome membrane. In terms of biological role, essential protease involved in epiderm development. Required for aleurone cell development in the endosperm probably by maintaining and restricting the aleurone and embryonic epidermal L1 cell-layer fates as well as meristems organization. Involved in the maintenance of adaxial/abaxial axis information in developing leaves, probably by regulating cell proliferation and expansion. Does not need calcium ions to be active. The chain is Calpain-type cysteine protease ADL1 (ADL1) from Oryza sativa subsp. japonica (Rice).